We begin with the raw amino-acid sequence, 207 residues long: MAHRLVEELVREGVIKSESVRRAMLAVPREEFVMPEYRMMAYEDRPLPLFADATISAPHMVAMMCELVEPKPGMKILEVGAGSGYQAAVCAEAMERRGRVYTVEIVKELAIYAAQNIERLGYWGVVEVYHGDGRSGLERHAPFDAIIVTAAARQIPPALVRQLKEGGTLVIPLVEHMGQILYKVTKRGERVEKRAVTYVLFVPLRES.

S56 is an active-site residue.

It belongs to the methyltransferase superfamily. L-isoaspartyl/D-aspartyl protein methyltransferase family.

The protein resides in the cytoplasm. It carries out the reaction [protein]-L-isoaspartate + S-adenosyl-L-methionine = [protein]-L-isoaspartate alpha-methyl ester + S-adenosyl-L-homocysteine. In terms of biological role, catalyzes the methyl esterification of L-isoaspartyl residues in peptides and proteins that result from spontaneous decomposition of normal L-aspartyl and L-asparaginyl residues. It plays a role in the repair and/or degradation of damaged proteins. This chain is Protein-L-isoaspartate O-methyltransferase, found in Pyrobaculum neutrophilum (strain DSM 2338 / JCM 9278 / NBRC 100436 / V24Sta) (Thermoproteus neutrophilus).